The chain runs to 276 residues: Halorhodopsin (276 aa).

The propeptide occupies 1–21 (MTAVSTTATTVLQATQSDVLQ). Topologically, residues 22–25 (EIQS) are extracellular. The chain crosses the membrane as a helical span at residues 26–51 (NFLLNSSIWVNIALAGVVILLFVAMG). At 52 to 57 (RDLESP) the chain is on the cytoplasmic side. The chain crosses the membrane as a helical span at residues 58–81 (RAKLIWVATMLVPLVSISSYAGLA). Residues 82-105 (SGLTVGFLQMPPGHALAGQEVLSP) are Extracellular-facing. The helical transmembrane segment at 106 to 127 (WGRYLTWTFSTPMILLALGLLA) threads the bilayer. Topologically, residues 128 to 130 (DTD) are cytoplasmic. A helical membrane pass occupies residues 131–154 (IASLFTAITMDIGMCVTGLAAALI). The Extracellular portion of the chain corresponds to 155-157 (TSS). Residues 158-180 (HLLRWVFYGISCAFFVAVLYVLL) form a helical membrane-spanning segment. Residues 181 to 192 (VQWPADAEAAGT) lie on the Cytoplasmic side of the membrane. Residues 193-216 (SEIFGTLKILTVVLWLGYPILWAL) form a helical membrane-spanning segment. Residues 217-225 (GSEGVALLS) lie on the Extracellular side of the membrane. The chain crosses the membrane as a helical span at residues 226–254 (VGVTSWGYSGLDILAKYVFAFLLLRWVAA). Lys-241 carries the N6-(retinylidene)lysine modification. The Cytoplasmic segment spans residues 255-276 (NEGTVSGSGMGIGSGGAAPADD).

It belongs to the archaeal/bacterial/fungal opsin family.

It is found in the cell membrane. Its function is as follows. Light-driven anion pump. This Halobacterium halobium (strain shark) protein is Halorhodopsin.